Consider the following 105-residue polypeptide: L-rhamnose mutarotase (105 aa).

Residue Tyr19 coordinates substrate. His23 (proton donor) is an active-site residue. Residues Tyr42 and 77–78 (WW) contribute to the substrate site.

The protein belongs to the rhamnose mutarotase family. Homodimer.

The protein localises to the cytoplasm. The enzyme catalyses alpha-L-rhamnose = beta-L-rhamnose. It participates in carbohydrate metabolism; L-rhamnose metabolism. Functionally, involved in the anomeric conversion of L-rhamnose. The polypeptide is L-rhamnose mutarotase (Mesorhizobium japonicum (strain LMG 29417 / CECT 9101 / MAFF 303099) (Mesorhizobium loti (strain MAFF 303099))).